We begin with the raw amino-acid sequence, 282 residues long: Endonuclease V (282 aa).

Positions 52 and 126 each coordinate Mg(2+). Residues 250–282 (SLGLPGPPTPRSPKAQRPVACPKGDSGESSALC) form a disordered region.

This sequence belongs to the endonuclease V family. Monomer. Interacts with PABPC1; the interaction is RNA-dependent and stimulates ENDOV activity. Mg(2+) serves as cofactor.

It localises to the cytoplasm. The protein localises to the nucleus. It is found in the nucleolus. Its subcellular location is the stress granule. Its activity is regulated as follows. Inhibited by normal intracellular concentrations of ATP. Functionally, endoribonuclease that specifically cleaves inosine-containing RNAs: cleaves RNA at the second phosphodiester bond 3' to inosine. Active against both single-stranded and double-stranded RNAs. Has strong preference for single-stranded RNAs (ssRNAs) toward double-stranded RNAs (dsRNAs). Cleaves mRNAs and tRNAs containing inosine. Also able to cleave structure-specific dsRNA substrates containing the specific sites 5'-IIUI-3' and 5'-UIUU-3'. Inosine is present in a number of RNAs following editing; the function of inosine-specific endoribonuclease is still unclear: it could either play a regulatory role in edited RNAs, or be involved in antiviral response by removing the hyperedited long viral dsRNA genome that has undergone A-to-I editing. Binds branched DNA structures. Endoribonuclease that specifically cleaves inosine-containing RNAs: cleaves RNA at the second phosphodiester bond 3' to inosine. Active against both single-stranded and double-stranded RNAs. Cleaves tRNAs containing inosine. This chain is Endonuclease V (ENDOV), found in Homo sapiens (Human).